Reading from the N-terminus, the 103-residue chain is Glutaredoxin-C11 (103 aa).

The Glutaredoxin domain maps to 1-102 (MERIRDLSSK…QMLKDAKAIW (102 aa)). Cysteine 21 and cysteine 24 are oxidised to a cystine.

Belongs to the glutaredoxin family. CC-type subfamily.

It localises to the cytoplasm. Functionally, has a glutathione-disulfide oxidoreductase activity in the presence of NADPH and glutathione reductase. Reduces low molecular weight disulfides and proteins. This chain is Glutaredoxin-C11 (GRXC11), found in Arabidopsis thaliana (Mouse-ear cress).